Consider the following 105-residue polypeptide: ATP synthase subunit c (105 aa).

Transmembrane regions (helical) follow at residues 3–23 (FLALFFLALVGVAFAYDGGMD), 32–52 (SILGAMIGLGIAAFGGAIGMG), and 78–98 (VAMAMIEAQVIYTLVFAIIAI).

The protein belongs to the ATPase C chain family. In terms of assembly, F-type ATPases have 2 components, F(1) - the catalytic core - and F(0) - the membrane proton channel. F(1) has five subunits: alpha(3), beta(3), gamma(1), delta(1), epsilon(1). F(0) has three main subunits: a(1), b(2) and c(10-14). The alpha and beta chains form an alternating ring which encloses part of the gamma chain. F(1) is attached to F(0) by a central stalk formed by the gamma and epsilon chains, while a peripheral stalk is formed by the delta and b chains.

Its subcellular location is the cell inner membrane. Functionally, f(1)F(0) ATP synthase produces ATP from ADP in the presence of a proton or sodium gradient. F-type ATPases consist of two structural domains, F(1) containing the extramembraneous catalytic core and F(0) containing the membrane proton channel, linked together by a central stalk and a peripheral stalk. During catalysis, ATP synthesis in the catalytic domain of F(1) is coupled via a rotary mechanism of the central stalk subunits to proton translocation. Its function is as follows. Key component of the F(0) channel; it plays a direct role in translocation across the membrane. A homomeric c-ring of between 10-14 subunits forms the central stalk rotor element with the F(1) delta and epsilon subunits. The chain is ATP synthase subunit c from Helicobacter acinonychis (strain Sheeba).